Reading from the N-terminus, the 293-residue chain is tRNA (guanine-N(7)-)-methyltransferase (293 aa).

A compositionally biased stretch (basic and acidic residues) spans 1-31; the sequence is MGGDKIKKDKRQKREDYRAAMRKDDISELPR. 2 disordered regions span residues 1–33 and 68–97; these read MGGDKIKKDKRQKREDYRAAMRKDDISELPRKK and IVDEPTTTSPPPPPPVPEQTPSEPDLTPLR. The segment covering 75–85 has biased composition (pro residues); the sequence is TSPPPPPPVPE. S-adenosyl-L-methionine contacts are provided by residues G111, 134 to 135, 169 to 170, and C189; these read EI and NT. The active site involves D192. 267-269 is a binding site for S-adenosyl-L-methionine; the sequence is TEE.

The protein belongs to the class I-like SAM-binding methyltransferase superfamily. TrmB family. Forms a complex with TRM82.

It is found in the nucleus. The catalysed reaction is guanosine(46) in tRNA + S-adenosyl-L-methionine = N(7)-methylguanosine(46) in tRNA + S-adenosyl-L-homocysteine. It functions in the pathway tRNA modification; N(7)-methylguanine-tRNA biosynthesis. In terms of biological role, catalyzes the formation of N(7)-methylguanine at position 46 (m7G46) in tRNA. The sequence is that of tRNA (guanine-N(7)-)-methyltransferase from Chaetomium globosum (strain ATCC 6205 / CBS 148.51 / DSM 1962 / NBRC 6347 / NRRL 1970) (Soil fungus).